The following is a 145-amino-acid chain: Peptide methionine sulfoxide reductase MsrB (145 aa).

Positions 6–129 constitute a MsrB domain; it reads KNERLQQLTD…NSAALRFIPV (124 aa). Catalysis depends on C118, which acts as the Nucleophile.

Belongs to the MsrB Met sulfoxide reductase family.

The catalysed reaction is L-methionyl-[protein] + [thioredoxin]-disulfide + H2O = L-methionyl-(R)-S-oxide-[protein] + [thioredoxin]-dithiol. The sequence is that of Peptide methionine sulfoxide reductase MsrB from Listeria monocytogenes serotype 4b (strain CLIP80459).